The following is a 266-amino-acid chain: Protein phosphatase 1 regulatory subunit 35 (266 aa).

Polar residues predominate over residues 1–10 (MMVYNGSQLE). The disordered stretch occupies residues 1-118 (MMVYNGSQLE…QDLGTPVQQS (118 aa)). Positions 21-38 (PGPPPEPRAPEPGAPVPE) are enriched in pro residues. A phosphoserine mark is found at Ser46 and Ser51. Over residues 62–79 (GRRKGRADRRGGARKGRQ) the composition is skewed to basic residues. Residues 86-97 (PPSPVRSGPPPA) show a composition bias toward pro residues.

The protein belongs to the PPP1R35 family. As to quaternary structure, interacts with PPP1CA; this interaction mediates the PPP1CA phosphatase activity inhibition. Interacts with RTTN; this interaction allows the mutual recruitment to the centriole.

The protein resides in the cytoplasm. Its subcellular location is the cytoskeleton. It is found in the microtubule organizing center. It localises to the centrosome. The protein localises to the centriole. During centriole duplication, plays a role in the centriole elongation by promoting the recruitment of the microtubule-binding elongation machinery through its interaction with RTTN, leading to the centriole to centrosome conversion. In addition may play a role in the primary cilia assembly. This Bos taurus (Bovine) protein is Protein phosphatase 1 regulatory subunit 35.